Reading from the N-terminus, the 63-residue chain is Serine protease inhibitor 3 (63 aa).

The N-terminal stretch at 1 to 23 is a signal peptide; it reads MAKLLAVFLVLLIAALVCEQALA. Disulfide bonds link Cys24–Cys39, Cys34–Cys52, and Cys37–Cys47. Residues 24 to 55 form the Pacifastin domain; it reads CTPGSRKYDGCNWCTCSSGGAWICTLKYCPPS.

The protein belongs to the protease inhibitor I19 family. Expressed in hemolymph, ovaries, testes and fat body of adults but are absent in the gut. Also present in larval hemolymph and fat body.

Its subcellular location is the secreted. In terms of biological role, in vitro, active against alpha-chymotrypsin. The sequence is that of Serine protease inhibitor 3 from Schistocerca gregaria (Desert locust).